Reading from the N-terminus, the 237-residue chain is Thrombin-like enzyme agkihpin-2 (237 aa).

Residue Met1 is a propeptide. In terms of domain architecture, Peptidase S1 spans 2 to 228 (ILGDDECNIN…HLDWIENIIA (227 aa)). A disulfide bridge connects residues Cys27 and Cys43. His42 functions as the Charge relay system in the catalytic mechanism. N-linked (GlcNAc...) asparagine glycosylation is present at Asn80. The active-site Charge relay system is Asp87. Intrachain disulfides connect Cys119-Cys189, Cys151-Cys168, and Cys179-Cys204. Ser183 functions as the Charge relay system in the catalytic mechanism.

This sequence belongs to the peptidase S1 family. Snake venom subfamily. Expressed by the venom gland (at protein level). Expressed by the venom gland.

It is found in the secreted. The hydrolysis of TAMe (tosyl-arginine methyl ester) substrate is activated by Ca(2+), Fe(3+), Mg(2+) and Zn(2+), and inhibited by EDTA, PMSF and DTT. Functionally, thrombin-like enzyme that shows fibrinogenolytic activity against bovine fibrinogen alpha and beta chains, but not gamma chain. Hydrolyzes fibrin. Enhances ADP-induced human platelet aggregation. Has arginine esterase activity for TAMe (tosyl-arginine methyl ester) substrate. Reduces thrombin-induced thrombosis. Does not have hemorrhagic activity. Reduces the motility of human liver cancer HepG2 cells in a wound-healing assay. In Gloydius halys (Chinese water mocassin), this protein is Thrombin-like enzyme agkihpin-2.